A 338-amino-acid polypeptide reads, in one-letter code: Glycerol-3-phosphate dehydrogenase [NAD(P)+] (338 aa).

Ser-11, Trp-12, His-32, Arg-33, and Lys-106 together coordinate NADPH. Lys-106, Gly-137, and Ser-139 together coordinate sn-glycerol 3-phosphate. Ala-141 lines the NADPH pocket. Residues Lys-192, Asp-245, Ser-255, Arg-256, and Asn-257 each coordinate sn-glycerol 3-phosphate. Residue Lys-192 is the Proton acceptor of the active site. Arg-256 is an NADPH binding site. NADPH-binding residues include Val-280 and Glu-282.

The protein belongs to the NAD-dependent glycerol-3-phosphate dehydrogenase family.

Its subcellular location is the cytoplasm. It catalyses the reaction sn-glycerol 3-phosphate + NAD(+) = dihydroxyacetone phosphate + NADH + H(+). The catalysed reaction is sn-glycerol 3-phosphate + NADP(+) = dihydroxyacetone phosphate + NADPH + H(+). Its pathway is membrane lipid metabolism; glycerophospholipid metabolism. Its function is as follows. Catalyzes the reduction of the glycolytic intermediate dihydroxyacetone phosphate (DHAP) to sn-glycerol 3-phosphate (G3P), the key precursor for phospholipid synthesis. In Lysinibacillus sphaericus (strain C3-41), this protein is Glycerol-3-phosphate dehydrogenase [NAD(P)+].